The chain runs to 273 residues: Formamidopyrimidine-DNA glycosylase (273 aa).

P2 acts as the Schiff-base intermediate with DNA in catalysis. The active-site Proton donor is the E3. K57 (proton donor; for beta-elimination activity) is an active-site residue. DNA-binding residues include H91, R110, and K151. An FPG-type zinc finger spans residues Q236–M270. Catalysis depends on R260, which acts as the Proton donor; for delta-elimination activity.

It belongs to the FPG family. Monomer. It depends on Zn(2+) as a cofactor.

The enzyme catalyses Hydrolysis of DNA containing ring-opened 7-methylguanine residues, releasing 2,6-diamino-4-hydroxy-5-(N-methyl)formamidopyrimidine.. The catalysed reaction is 2'-deoxyribonucleotide-(2'-deoxyribose 5'-phosphate)-2'-deoxyribonucleotide-DNA = a 3'-end 2'-deoxyribonucleotide-(2,3-dehydro-2,3-deoxyribose 5'-phosphate)-DNA + a 5'-end 5'-phospho-2'-deoxyribonucleoside-DNA + H(+). Involved in base excision repair of DNA damaged by oxidation or by mutagenic agents. Acts as a DNA glycosylase that recognizes and removes damaged bases. Has a preference for oxidized purines, such as 7,8-dihydro-8-oxoguanine (8-oxoG). Has AP (apurinic/apyrimidinic) lyase activity and introduces nicks in the DNA strand. Cleaves the DNA backbone by beta-delta elimination to generate a single-strand break at the site of the removed base with both 3'- and 5'-phosphates. This is Formamidopyrimidine-DNA glycosylase from Actinobacillus pleuropneumoniae serotype 5b (strain L20).